The primary structure comprises 186 residues: MLMLASASPARHRLLQQALIPHQVMVSGVDEETIHHLDPVRLVQHLAEAKAGVVRQQIEAALPVLGCDSVLEFDGTVFGKPATAVEASSRWQRMAGAWGLLHTGHCLLSVNGERLSETVTTRVLFSALSDSEIEAYVATGEPLLCAGGFALEGQGGLMVERLEGCFSNVIGLSLPLLRRWLLVINE.

Asp68 (proton acceptor) is an active-site residue.

It belongs to the Maf family. It depends on a divalent metal cation as a cofactor.

It localises to the cytoplasm. It catalyses the reaction a ribonucleoside 5'-triphosphate + H2O = a ribonucleoside 5'-phosphate + diphosphate + H(+). The enzyme catalyses a 2'-deoxyribonucleoside 5'-triphosphate + H2O = a 2'-deoxyribonucleoside 5'-phosphate + diphosphate + H(+). Functionally, nucleoside triphosphate pyrophosphatase. May have a dual role in cell division arrest and in preventing the incorporation of modified nucleotides into cellular nucleic acids. This Prochlorococcus marinus (strain MIT 9303) protein is Nucleoside triphosphate pyrophosphatase.